The following is a 222-amino-acid chain: GTP cyclohydrolase 1 (222 aa).

Residues Cys-111, His-114, and Cys-182 each coordinate Zn(2+).

It belongs to the GTP cyclohydrolase I family. In terms of assembly, homomer.

It catalyses the reaction GTP + H2O = 7,8-dihydroneopterin 3'-triphosphate + formate + H(+). The protein operates within cofactor biosynthesis; 7,8-dihydroneopterin triphosphate biosynthesis; 7,8-dihydroneopterin triphosphate from GTP: step 1/1. This Salmonella gallinarum (strain 287/91 / NCTC 13346) protein is GTP cyclohydrolase 1.